The primary structure comprises 122 residues: Large ribosomal subunit protein uL14 (122 aa).

The protein belongs to the universal ribosomal protein uL14 family. Part of the 50S ribosomal subunit. Forms a cluster with proteins L3 and L19. In the 70S ribosome, L14 and L19 interact and together make contacts with the 16S rRNA in bridges B5 and B8.

Its function is as follows. Binds to 23S rRNA. Forms part of two intersubunit bridges in the 70S ribosome. The chain is Large ribosomal subunit protein uL14 from Corynebacterium kroppenstedtii (strain DSM 44385 / JCM 11950 / CIP 105744 / CCUG 35717).